We begin with the raw amino-acid sequence, 355 residues long: Glutamine synthetase root isozyme 4 (355 aa).

One can recognise a GS beta-grasp domain in the interval 19–99 (IIAEYIWIGG…VMCDCYTPAG (81 aa)). Residues 37-66 (ARTLPGPVTDPSKLPKWNYDGSSTGQAPGE) are disordered. The 250-residue stretch at 106 to 355 (KRYSAAKIFS…IAETTIVWKP (250 aa)) folds into the GS catalytic domain.

This sequence belongs to the glutamine synthetase family. Homooctamer. Found in all the tissues examined with higher expression found in tissues of the root, stem and seedling shoot.

It localises to the cytoplasm. It carries out the reaction L-glutamate + NH4(+) + ATP = L-glutamine + ADP + phosphate + H(+). In terms of biological role, plays a role in the flow of nitrogen into nitrogenous organic compounds. This is Glutamine synthetase root isozyme 4 (GLN5) from Zea mays (Maize).